We begin with the raw amino-acid sequence, 457 residues long: Nuclear hormone receptor family member odr-7 (457 aa).

Disordered regions lie at residues 57–95 and 230–252; these read EQPN…DNDA and KQES…LQQP. The nuclear receptor DNA-binding region spans 327 to 407; the sequence is LHDCQVCLST…IGMLPENVQH (81 aa). 2 NR C4-type zinc fingers span residues 330–351 and 367–395; these read CQVC…CAAC and CKRN…MKRC. The tract at residues 435 to 457 is disordered; the sequence is QPSGSAAQPITVSSSESPRHTTN.

Belongs to the nuclear hormone receptor family. NR0 subfamily. In terms of assembly, heterodimer with a partner that confers DNA binding capacity or a nuclear hormone receptor whose DNA binding it inhibits. Expressed predominantly in the AWA neurons.

It is found in the nucleus. The protein localises to the cytoplasm. It localises to the perinuclear region. Functionally, required for the function of one pair of chemosensory neurons called AWA neurons that are involved in chemotaxis to volatile odorants. Acts in a pathway that specifies olfactory neuronal fate. Regulates the transcription of olfactory signaling molecules such as odr-10 that specify AWA neuron identity and function. Represses the expression in AWA neurons of factors such as str-2 which specify AWC neuron identity. The protein is Nuclear hormone receptor family member odr-7 (odr-7) of Caenorhabditis elegans.